The sequence spans 224 residues: Cytochrome c oxidase subunit 2 (224 aa).

The Mitochondrial intermembrane segment spans residues 1-26 (MSTWGQMNLMDPASPIQIEMMLFHDH). A helical transmembrane segment spans residues 27-48 (AMAILIGIFTLVSCLGVKLCFN). The Mitochondrial matrix segment spans residues 49 to 62 (TLSTRTMHEAQLLE). Residues 63 to 82 (TLWTILPAFLLVWLALPSLR) traverse the membrane as a helical segment. At 83 to 224 (LLYLLDEQSS…DVKDFINMCN (142 aa)) the chain is on the mitochondrial intermembrane side. Cu cation contacts are provided by His-161, Cys-196, Glu-198, Cys-200, His-204, and Met-207. Glu-198 contributes to the Mg(2+) binding site.

This sequence belongs to the cytochrome c oxidase subunit 2 family. In terms of assembly, component of the cytochrome c oxidase (complex IV, CIV), a multisubunit enzyme composed of a catalytic core of 3 subunits and several supernumerary subunits. The complex exists as a monomer or a dimer and forms supercomplexes (SCs) in the inner mitochondrial membrane with ubiquinol-cytochrome c oxidoreductase (cytochrome b-c1 complex, complex III, CIII). The cofactor is Cu cation.

Its subcellular location is the mitochondrion inner membrane. The catalysed reaction is 4 Fe(II)-[cytochrome c] + O2 + 8 H(+)(in) = 4 Fe(III)-[cytochrome c] + 2 H2O + 4 H(+)(out). Its function is as follows. Component of the cytochrome c oxidase, the last enzyme in the mitochondrial electron transport chain which drives oxidative phosphorylation. The respiratory chain contains 3 multisubunit complexes succinate dehydrogenase (complex II, CII), ubiquinol-cytochrome c oxidoreductase (cytochrome b-c1 complex, complex III, CIII) and cytochrome c oxidase (complex IV, CIV), that cooperate to transfer electrons derived from NADH and succinate to molecular oxygen, creating an electrochemical gradient over the inner membrane that drives transmembrane transport and the ATP synthase. Cytochrome c oxidase is the component of the respiratory chain that catalyzes the reduction of oxygen to water. Electrons originating from reduced cytochrome c in the intermembrane space (IMS) are transferred via the dinuclear copper A center (CU(A)) of subunit 2 and heme A of subunit 1 to the active site in subunit 1, a binuclear center (BNC) formed by heme A3 and copper B (CU(B)). The BNC reduces molecular oxygen to 2 water molecules using 4 electrons from cytochrome c in the IMS and 4 protons from the mitochondrial matrix. This is Cytochrome c oxidase subunit 2 (COII) from Albinaria turrita (Door snail).